The sequence spans 306 residues: uncharacterized protein (306 aa).

A disordered region spans residues His40 to Glu156. A compositionally biased stretch (low complexity) spans Glu64–Leu73. Positions Lys129–Ser139 are enriched in basic residues.

This is an uncharacterized protein from Rattus norvegicus (Rat).